The sequence spans 106 residues: Large ribosomal subunit protein eL42 (106 aa).

It belongs to the eukaryotic ribosomal protein eL42 family.

This Kluyveromyces marxianus (Yeast) protein is Large ribosomal subunit protein eL42 (RPL44).